Here is a 526-residue protein sequence, read N- to C-terminus: Lysine--tRNA ligase (526 aa).

The 'HIGH' region signature appears at 30 to 38 (PSGYVHIGN). 6 residues coordinate Zn(2+): Asp95, Cys99, His100, His106, Cys177, and Cys199. Residues 280 to 284 (KMSGS) carry the 'KMSKS' region motif.

The protein belongs to the class-I aminoacyl-tRNA synthetase family. It depends on Zn(2+) as a cofactor.

The protein localises to the cytoplasm. It carries out the reaction tRNA(Lys) + L-lysine + ATP = L-lysyl-tRNA(Lys) + AMP + diphosphate. In Thermococcus kodakarensis (strain ATCC BAA-918 / JCM 12380 / KOD1) (Pyrococcus kodakaraensis (strain KOD1)), this protein is Lysine--tRNA ligase (lysS).